Consider the following 357-residue polypeptide: Arginine kinase Cal b 2.0101 (357 aa).

The Phosphagen kinase N-terminal domain occupies 9-91 (KLEEGFKKLE…FDPIIEDYHK (83 aa)). Residue 64–68 (GVGVY) participates in L-arginine binding. Positions 119 to 356 (FVISTRVRCG…LELIKIEKEM (238 aa)) constitute a Phosphagen kinase C-terminal domain. Residues 122 to 126 (STRVR) and H185 each bind ATP. Cysteines 201 and 271 form a disulfide. Residue E225 participates in L-arginine binding. Residue R229 participates in ATP binding. C271 lines the L-arginine pocket. ATP-binding positions include 280–284 (RASVH) and 309–314 (RGTRGE). An L-arginine-binding site is contributed by E314.

This sequence belongs to the ATP:guanido phosphotransferase family. In terms of tissue distribution, expressed in chela muscle (at protein level). Expressed in muscle.

The catalysed reaction is L-arginine + ATP = N(omega)-phospho-L-arginine + ADP + H(+). Functionally, catalyzes the reversible transfer of high energy ATP gamma-phosphate group to L-arginine. In Callinectes bellicosus (Warrior swimming crab), this protein is Arginine kinase Cal b 2.0101.